A 1122-amino-acid polypeptide reads, in one-letter code: Midnolin homolog (1122 aa).

Positions 69–143 constitute a Ubiquitin-like domain; the sequence is INLNISTTTG…IILIPNVETG (75 aa). The segment at 210-300 is required for interaction with Pc; sequence GGASGSSINA…SGQRSSGRIG (91 aa). Disordered regions lie at residues 257-399, 596-630, 645-677, 746-775, 840-876, 886-905, 922-955, and 1067-1122; these read VGGS…STLN, KHRH…HFFN, FATS…GAGA, GVVS…KSGS, APTT…RSKM, KCNS…ASGS, AATK…NGCT, and AAPA…DTAA. Positions 266–298 are enriched in low complexity; it reads SGTSSSSSSTSSSSSSSSSSSRTRSSGQRSSGR. 2 stretches are compositionally biased toward basic residues: residues 300 to 310 and 321 to 352; these read GHGHVHSHQHP and SHGH…HHHN. Low complexity predominate over residues 375–397; the sequence is PSSSGASGSAPATGTGQSQSSST. Over residues 596 to 610 the composition is skewed to basic residues; sequence KHRHYHGQGHGHGHG. Composition is skewed to low complexity over residues 612-627, 648-663, 746-766, 856-867, 889-903, and 922-936; these read GHSS…SSSH, SSSS…SSSP, GVVS…AASG, SGSSSTTSSGSG, SRAQ…TLAS, and AATK…SSHS. Composition is skewed to polar residues over residues 937-954 and 1071-1085; these read CCQT…SNGC and NSIT…VNGN. Low complexity predominate over residues 1086 to 1107; it reads TSTAPATAATSAAAAPTAAPPS.

As to quaternary structure, interacts with PRC1 complex member polycomb protein Pc; the interaction targets Pc for ubiquitin-independent proteasomal degradation. Does not interact with PRC1 members Ph, Psc or Sce so does not appear to be a member of the PRC1 complex. Interacts with 26S proteasome regulatory subunit Rpn10.

The protein localises to the nucleus. Functionally, facilitates ubiquitin-independent proteasomal degradation of polycomb protein Pc by interacting directly with the proteasome and recruiting Pc to it. This chain is Midnolin homolog, found in Drosophila melanogaster (Fruit fly).